A 364-amino-acid polypeptide reads, in one-letter code: tRNA (adenine(58)-N(1))-methyltransferase catalytic subunit trm61 (364 aa).

S-adenosyl-L-methionine contacts are provided by residues 114-116 (SAS), E135, R140, 167-168 (DV), and D186. Residues 280 to 309 (EQNLSSDAKVEDQDNDSMLGENKSSVSTET) are disordered.

This sequence belongs to the class I-like SAM-binding methyltransferase superfamily. TRM61 family. As to quaternary structure, heterotetramer; composed of two copies of TRM6 and two copies of TRM61.

The protein localises to the nucleus. It carries out the reaction adenosine(58) in tRNA + S-adenosyl-L-methionine = N(1)-methyladenosine(58) in tRNA + S-adenosyl-L-homocysteine + H(+). In terms of biological role, catalytic subunit of tRNA (adenine-N(1)-)-methyltransferase, which catalyzes the formation of N(1)-methyladenine at position 58 (m1A58) in initiator methionyl-tRNA. The polypeptide is tRNA (adenine(58)-N(1))-methyltransferase catalytic subunit trm61 (cpd1) (Schizosaccharomyces pombe (strain 972 / ATCC 24843) (Fission yeast)).